We begin with the raw amino-acid sequence, 584 residues long: Dihydroxyacetone kinase 1 (584 aa).

Ser2 carries the post-translational modification N-acetylserine. Phosphoserine is present on residues Ser2 and Ser5. A DhaK domain is found at 7 to 353; sequence EVTDPVNSSL…LNAFTNAPGW (347 aa). Residues 51–54, Lys103, and Asp108 contribute to the substrate site; that span reads GSGH. His220 serves as the catalytic Tele-hemiaminal-histidine intermediate. Position 365 is a phosphoserine (Ser365). Residues 386–582 form the DhaL domain; that stretch reads DKFAEWMKSG…LCEFLKGVQS (197 aa). ATP-binding positions include 415 to 418 and 459 to 460; these read DGDC and TS. A Phosphoserine modification is found at Ser512. Residues 514-515 and 567-569 each bind ATP; these read TM and DPG.

The protein belongs to the dihydroxyacetone kinase (DAK) family.

The catalysed reaction is dihydroxyacetone + ATP = dihydroxyacetone phosphate + ADP + H(+). It catalyses the reaction D-glyceraldehyde + ATP = D-glyceraldehyde 3-phosphate + ADP + H(+). Its pathway is polyol metabolism; glycerol fermentation; glycerone phosphate from glycerol (oxidative route): step 2/2. Functionally, catalyzes both the phosphorylation of dihydroxyacetone and of glyceraldehyde. This Saccharomyces cerevisiae (strain ATCC 204508 / S288c) (Baker's yeast) protein is Dihydroxyacetone kinase 1 (DAK1).